Reading from the N-terminus, the 481-residue chain is Drebrin-like protein (481 aa).

Residues 3–131 (SLDISDPDIT…DEKAITAALN (129 aa)) enclose the ADF-H domain. Over residues 217–227 (YWKQQQAEKQK) the composition is skewed to basic and acidic residues. The segment at 217 to 423 (YWKQQQAEKQ…PAEEQYDQSG (207 aa)) is disordered. Positions 228 to 237 (QQQQQQQQQA) are enriched in low complexity. Positions 248-261 (TVGNKFQEQVSKPT) are enriched in polar residues. Residues 291–300 (PPAPSRPAAP) show a composition bias toward pro residues. Positions 325–335 (QYEEPQYEEEQ) are enriched in acidic residues. Residues 336-413 (QQQYEEQPTE…YQEEQQQYEQ (78 aa)) show a composition bias toward low complexity. An SH3 domain is found at 422-481 (SGYLQAKALYDYNGENDGDLSFREGDIITILDQSDPDGWWQGSLPTGEQGFFPSNFVQQL).

The protein belongs to the ABP1 family.

Its subcellular location is the cytoplasm. It localises to the cytoskeleton. The protein localises to the cell projection. The protein resides in the pseudopodium. Its function is as follows. Actin-binding adapter protein. Binds to F-actin but is not involved in actin polymerization, capping or bundling. Does not bind G-actin. Controls pseudopodium number and motility in early stages of chemotactic aggregation. This Dictyostelium discoideum (Social amoeba) protein is Drebrin-like protein (abpE-1).